Here is a 213-residue protein sequence, read N- to C-terminus: Guanylate kinase (213 aa).

The 180-residue stretch at 10 to 189 (GLLLMVVAPS…AYADLAHIYH (180 aa)) folds into the Guanylate kinase-like domain. Residue 17–24 (APSGVGKT) coordinates ATP.

This sequence belongs to the guanylate kinase family.

It is found in the cytoplasm. The catalysed reaction is GMP + ATP = GDP + ADP. In terms of biological role, essential for recycling GMP and indirectly, cGMP. The sequence is that of Guanylate kinase (gmk) from Caulobacter vibrioides (strain ATCC 19089 / CIP 103742 / CB 15) (Caulobacter crescentus).